We begin with the raw amino-acid sequence, 193 residues long: Probable chemoreceptor glutamine deamidase CheD 1 (193 aa).

The disordered stretch occupies residues 1-26; sequence MPHTPPAYPAASADHRPPSSPPAEPA.

The protein belongs to the CheD family.

It carries out the reaction L-glutaminyl-[protein] + H2O = L-glutamyl-[protein] + NH4(+). Functionally, probably deamidates glutamine residues to glutamate on methyl-accepting chemotaxis receptors (MCPs), playing an important role in chemotaxis. This is Probable chemoreceptor glutamine deamidase CheD 1 from Chromobacterium violaceum (strain ATCC 12472 / DSM 30191 / JCM 1249 / CCUG 213 / NBRC 12614 / NCIMB 9131 / NCTC 9757 / MK).